The sequence spans 178 residues: ATP-dependent protease subunit HslV (178 aa).

The active site involves Thr-5. Na(+) is bound by residues Gly-161, Cys-164, and Thr-167.

The protein belongs to the peptidase T1B family. HslV subfamily. In terms of assembly, a double ring-shaped homohexamer of HslV is capped on each side by a ring-shaped HslU homohexamer. The assembly of the HslU/HslV complex is dependent on binding of ATP.

Its subcellular location is the cytoplasm. The catalysed reaction is ATP-dependent cleavage of peptide bonds with broad specificity.. With respect to regulation, allosterically activated by HslU binding. Protease subunit of a proteasome-like degradation complex believed to be a general protein degrading machinery. This is ATP-dependent protease subunit HslV from Aliarcobacter butzleri (strain RM4018) (Arcobacter butzleri).